We begin with the raw amino-acid sequence, 362 residues long: Molybdenum import ATP-binding protein ModC (362 aa).

The 235-residue stretch at 2–236 (ASPIEVRLHM…LDLPLAMGGD (235 aa)) folds into the ABC transporter domain. 34–41 (GPSGSGKT) contributes to the ATP binding site. One can recognise a Mop domain in the interval 297 to 362 (QSSILNRLPV…AQIKAVAVLA (66 aa)).

The protein belongs to the ABC transporter superfamily. Molybdate importer (TC 3.A.1.8) family. In terms of assembly, the complex is composed of two ATP-binding proteins (ModC), two transmembrane proteins (ModB) and a solute-binding protein (ModA).

Its subcellular location is the cell inner membrane. The enzyme catalyses molybdate(out) + ATP + H2O = molybdate(in) + ADP + phosphate + H(+). Part of the ABC transporter complex ModABC involved in molybdenum import. Responsible for energy coupling to the transport system. This is Molybdenum import ATP-binding protein ModC from Pseudomonas savastanoi pv. phaseolicola (strain 1448A / Race 6) (Pseudomonas syringae pv. phaseolicola (strain 1448A / Race 6)).